Consider the following 554-residue polypeptide: Intraflagellar transport protein 56 (554 aa).

Residues 1–27 form a disordered region; that stretch reads MMLSRAKPAVGGESPHTDKRKKKGRKI. Over residues 18–27 the composition is skewed to basic residues; that stretch reads DKRKKKGRKI. TPR repeat units follow at residues 57 to 90, 92 to 125, 151 to 184, and 468 to 501; these read EDTNLWIGYCAFHLGDYKRALEEYENAAKEENCN, EVWVNLACTYFFLGMYKQAEAAGFKAPKSRLQNR, KEDQLSLASIHYMRSHYQEAIDIYKRILLDNREY, and ANDCYKMGQFYYSAKAFDVLERLDPNPEYWEGKR.

The protein belongs to the IFT56 family. In terms of assembly, component of the IFT complex B. Interacts with IFT46; the interaction is direct.

Its subcellular location is the cell projection. The protein resides in the cilium. Its function is as follows. Component of the intraflagellar transport (IFT) complex B required for transport of proteins in the motile cilium. Required for transport of specific ciliary cargo proteins related to motility, while it is neither required for IFT complex B assembly or motion nor for cilium assembly. Required for efficient coupling between the accumulation of GLI2 and GLI3 at the ciliary tips and their dissociation from the negative regulator SUFU. Plays a key role in maintaining the integrity of the IFT complex B and the proper ciliary localization of the IFT complex B components. Not required for IFT complex A ciliary localization or function. Essential for maintaining proper microtubule organization within the ciliary axoneme. The protein is Intraflagellar transport protein 56 of Rattus norvegicus (Rat).